The following is a 597-amino-acid chain: MFS-type transporter FPY5 (597 aa).

Residues 1–55 are disordered; the sequence is MSETTGLPLKHLQGSPPGTPVNTNNESNEASPDDGCRLPDTVTEAEASSDNHGSV. Composition is skewed to polar residues over residues 20 to 30 and 46 to 55; these read PVNTNNESNEA and EASSDNHGSV. A glycan (N-linked (GlcNAc...) asparagine) is linked at N25. Residue N72 is glycosylated (N-linked (GlcNAc...) asparagine). 9 consecutive transmembrane segments (helical) span residues 94–114, 120–140, 147–167, 183–203, 214–234, 241–261, 286–306, 316–336, and 360–380; these read LSLLLSTLETTIVSTALVSIV, FNMAGWIVTSYLVTYTGFLII, IFGCKLMLLLAITIFTVFSMA, FQGMGGSGIYSLSTIMVPLMV, IMSSTFILSSVLGPILGGAIT, WVFYFNGPGGALAAVLLAFSV, VDFVGMTVSLAASILIIFALE, SGAIVSTFVLSGVLWIAFIAW, and FVMGLLLNGFFTGFPFMAALI. N-linked (GlcNAc...) asparagine glycosylation is present at N390. A run of 5 helical transmembrane segments spans residues 402 to 422, 424 to 444, 463 to 483, 498 to 518, and 562 to 582; these read LPLLLLSPLATAINGILVSKL, VPPLYTLFLGGSLQTIGVGLY, IMGLGFGFNLSTILMMVPLVV, IRVLGGTIGLAVCSALLINHI, and EQMRVMLYFSIASILSLVLLV.

It belongs to the major facilitator superfamily. TCR/Tet family.

It localises to the membrane. It functions in the pathway secondary metabolite biosynthesis. MFS-type transporter; part of the gene cluster that mediates the biosynthesis of the gamma-pyrones fusapyrone (FPY) and deoxyfusapyrone (dFPY). The polypeptide is MFS-type transporter FPY5 (Fusarium mangiferae (Mango malformation disease fungus)).